A 312-amino-acid polypeptide reads, in one-letter code: tRNA uridine(34) hydroxylase (312 aa).

Residues 124–218 form the Rhodanese domain; it reads SDPEVLLIDT…YLEEVPEQES (95 aa). The active-site Cysteine persulfide intermediate is cysteine 178. The disordered stretch occupies residues 293–312; the sequence is AKARNQPHPIGRNYRLPSEA.

The protein belongs to the TrhO family.

It carries out the reaction uridine(34) in tRNA + AH2 + O2 = 5-hydroxyuridine(34) in tRNA + A + H2O. Functionally, catalyzes oxygen-dependent 5-hydroxyuridine (ho5U) modification at position 34 in tRNAs. This chain is tRNA uridine(34) hydroxylase, found in Pseudomonas syringae pv. syringae (strain B728a).